Consider the following 638-residue polypeptide: DNA mismatch repair protein MutL (638 aa).

The interval 404-433 is disordered; the sequence is FGTQTNAFGSMATPRDNSRGNYSAGESRQR.

This sequence belongs to the DNA mismatch repair MutL/HexB family.

Functionally, this protein is involved in the repair of mismatches in DNA. It is required for dam-dependent methyl-directed DNA mismatch repair. May act as a 'molecular matchmaker', a protein that promotes the formation of a stable complex between two or more DNA-binding proteins in an ATP-dependent manner without itself being part of a final effector complex. The chain is DNA mismatch repair protein MutL from Shewanella baltica (strain OS195).